Consider the following 564-residue polypeptide: Apyrase (564 aa).

The first 25 residues, 1–25 (MAGKPGIQLFVIFLLLSSFAAVVWA), serve as a signal peptide directing secretion. A divalent metal cation is bound by residues aspartate 48, histidine 50, aspartate 99, asparagine 131, histidine 234, and histidine 258. An AMP-binding site is contributed by arginine 371. N-linked (GlcNAc...) asparagine glycosylation is present at asparagine 391. AMP-binding residues include arginine 406, phenylalanine 425, and aspartate 515.

It belongs to the 5'-nucleotidase family. Requires a divalent metal cation as cofactor. In terms of tissue distribution, female salivary gland (at protein level). Low-level expression in male tissues. Not detected in female carcasses without salivary glands.

It is found in the secreted. It catalyses the reaction a ribonucleoside 5'-triphosphate + 2 H2O = a ribonucleoside 5'-phosphate + 2 phosphate + 2 H(+). Its function is as follows. Facilitates hematophagy by inhibiting ADP-dependent platelet aggregation in the host. Cleaves adenosine triphosphate (ATP) and adenosine diphosphate (ADP) to adenosine monophosphate (AMP) and inorganic phosphate. May reduce probing time by facilitating the speed of locating blood. The protein is Apyrase of Aedes albopictus (Asian tiger mosquito).